We begin with the raw amino-acid sequence, 707 residues long: Protein kinase C theta type (707 aa).

The C2 domain occupies 1–107 (MSPFLRIGLS…KNNGRTEIWL (107 aa)). Y90 is modified (phosphotyrosine; by LCK). The Phorbol-ester/DAG-type 1 zinc finger occupies 159–209 (CHEFTATFFPQPTFCSVCHEFVWGLNKQGYQCRQCNAAIHKKCIDKVIAKC). The residue at position 219 (T219) is a Phosphothreonine; by autocatalysis. The Phorbol-ester/DAG-type 2 zinc finger occupies 231 to 281 (PHRFKVYNYKSPTFCEHCGTLLWGLARQGLKCDACGMNVHHRCQTKVANLC). The interval 327-365 (ETRPPCVPTPGKREPQGISWDSPLDGSNKSAGPPEPEVS) is disordered. S348 is modified (phosphoserine). Positions 380 to 634 (FILHKMLGKG…RGDIRQHPLF (255 aa)) constitute a Protein kinase domain. Residues 386 to 394 (LGKGSFGKV) and K409 contribute to the ATP site. The active-site Proton acceptor is the D504. The residue at position 538 (T538) is a Phosphothreonine; by PDPK1. The AGC-kinase C-terminal domain maps to 635 to 706 (REINWEELER…INPGMETLIC (72 aa)). A Phosphoserine; by autocatalysis modification is found at S676. The residue at position 685 (S685) is a Phosphoserine. Phosphoserine; by autocatalysis is present on S695.

Belongs to the protein kinase superfamily. AGC Ser/Thr protein kinase family. PKC subfamily. In terms of assembly, part of a membrane raft complex composed at least of BCL10, CARD11, MALT1 and IKBKB. Interacts with GLRX3 (via N-terminus). Interacts with ECT2. Interacts with CCDC88A/GIV; the interaction leads to phosphorylation of CCDC88A and inhibition of its guanine nucleotide exchange factor activity. Interacts with CD28. Requires Mg(2+) as cofactor. Post-translationally, autophosphorylation at Thr-219 is required for targeting to the TCR and cellular function of PRKCQ upon antigen receptor ligation. Following TCR stimulation, phosphorylated at Tyr-90 and Ser-685. As to expression, T-lymphocytes and skeletal muscle.

Its subcellular location is the cytoplasm. The protein resides in the cell membrane. It catalyses the reaction L-seryl-[protein] + ATP = O-phospho-L-seryl-[protein] + ADP + H(+). The catalysed reaction is L-threonyl-[protein] + ATP = O-phospho-L-threonyl-[protein] + ADP + H(+). With respect to regulation, novel PKCs (PRKCD, PRKCE, PRKCH and PRKCQ) are calcium-insensitive, but activated by diacylglycerol (DAG) and phosphatidylserine. Three specific sites; Thr-538 (activation loop of the kinase domain), Ser-676 (turn motif) and Ser-695 (hydrophobic region), need to be phosphorylated for its full activation. In terms of biological role, calcium-independent, phospholipid- and diacylglycerol (DAG)-dependent serine/threonine-protein kinase that mediates non-redundant functions in T-cell receptor (TCR) signaling, including T-cells activation, proliferation, differentiation and survival, by mediating activation of multiple transcription factors such as NF-kappa-B, JUN, NFATC1 and NFATC2. In TCR-CD3/CD28-co-stimulated T-cells, is required for the activation of NF-kappa-B and JUN, which in turn are essential for IL2 production, and participates in the calcium-dependent NFATC1 and NFATC2 transactivation. Mediates the activation of the canonical NF-kappa-B pathway (NFKB1) by direct phosphorylation of CARD11 on several serine residues, inducing CARD11 association with lipid rafts and recruitment of the BCL10-MALT1 complex, which then activates IKK complex, resulting in nuclear translocation and activation of NFKB1. May also play an indirect role in activation of the non-canonical NF-kappa-B (NFKB2) pathway. In the signaling pathway leading to JUN activation, acts by phosphorylating the mediator STK39/SPAK and may not act through MAP kinases signaling. Plays a critical role in TCR/CD28-induced NFATC1 and NFATC2 transactivation by participating in the regulation of reduced inositol 1,4,5-trisphosphate generation and intracellular calcium mobilization. After costimulation of T-cells through CD28 can phosphorylate CBLB and is required for the ubiquitination and subsequent degradation of CBLB, which is a prerequisite for the activation of TCR. During T-cells differentiation, plays an important role in the development of T-helper 2 (Th2) cells following immune and inflammatory responses, and, in the development of inflammatory autoimmune diseases, is necessary for the activation of IL17-producing Th17 cells. May play a minor role in Th1 response. Upon TCR stimulation, mediates T-cell protective survival signal by phosphorylating BAD, thus protecting T-cells from BAD-induced apoptosis, and by up-regulating BCL-X(L)/BCL2L1 levels through NF-kappa-B and JUN pathways. In platelets, regulates signal transduction downstream of the ITGA2B, CD36/GP4, F2R/PAR1 and F2RL3/PAR4 receptors, playing a positive role in 'outside-in' signaling and granule secretion signal transduction. May relay signals from the activated ITGA2B receptor by regulating the uncoupling of WASP and WIPF1, thereby permitting the regulation of actin filament nucleation and branching activity of the Arp2/3 complex. May mediate inhibitory effects of free fatty acids on insulin signaling by phosphorylating IRS1, which in turn blocks IRS1 tyrosine phosphorylation and downstream activation of the PI3K/AKT pathway. Phosphorylates MSN (moesin) in the presence of phosphatidylglycerol or phosphatidylinositol. Phosphorylates PDPK1 at 'Ser-504' and 'Ser-532' and negatively regulates its ability to phosphorylate PKB/AKT1. Phosphorylates CCDC88A/GIV and inhibits its guanine nucleotide exchange factor activity. Phosphorylates and activates LRRK1, which phosphorylates RAB proteins involved in intracellular trafficking. This Mus musculus (Mouse) protein is Protein kinase C theta type (Prkcq).